The primary structure comprises 419 residues: Inositol-tetrakisphosphate 1-kinase (419 aa).

A 1D-myo-inositol 1,3,4-trisphosphate-binding site is contributed by Lys18. ATP contacts are provided by Arg106 and Lys157. Residues 117–325 enclose the ATP-grasp domain; sequence EAYMKDDRIC…IASVLQGQSS (209 aa). 2 residues coordinate 1D-myo-inositol 1,3,4-trisphosphate: His167 and Lys199. ATP contacts are provided by residues 188 to 199, Ser214, Ser232, and Ser236; that span reads QNFINHNAVLYK. Asp281, Asp295, and Asn297 together coordinate Mg(2+). Asn297 is a binding site for 1D-myo-inositol 1,3,4-trisphosphate. Lys388 is subject to N6-acetyllysine; by EP300 and CREBBP. Phosphoserine is present on Ser401. An N6-acetyllysine; by EP300 and CREBBP modification is found at Lys415.

Belongs to the ITPK1 family. As to quaternary structure, monomer. Interacts with GPS1/COPS1. Mg(2+) serves as cofactor. Acetylation by EP300 and CREBBP destabilizes ITPK1, and down-regulates enzymatic activity. Deacetylated by SIRT1.

It catalyses the reaction 1D-myo-inositol 3,4,5,6-tetrakisphosphate + ATP = 1D-myo-inositol 1,3,4,5,6-pentakisphosphate + ADP + H(+). It carries out the reaction 1D-myo-inositol 1,3,4-trisphosphate + ATP = 1D-myo-inositol 1,3,4,5-tetrakisphosphate + ADP + H(+). The enzyme catalyses 1D-myo-inositol 1,3,4-trisphosphate + ATP = 1D-myo-inositol 1,3,4,6-tetrakisphosphate + ADP + H(+). The catalysed reaction is 1D-myo-inositol 3,4,6-trisphosphate + ATP = 1D-myo-inositol 1,3,4,6-tetrakisphosphate + ADP + H(+). It catalyses the reaction 1D-myo-inositol 1,3,4-trisphosphate + 1D-myo-inositol 1,3,4,5,6-pentakisphosphate = 1D-myo-inositol 3,4,5,6-tetrakisphosphate + 1D-myo-inositol 1,3,4,6-tetrakisphosphate. It carries out the reaction 1D-myo-inositol 1,3,4-trisphosphate + 1D-myo-inositol 1,3,4,5,6-pentakisphosphate = 1D-myo-inositol 3,4,5,6-tetrakisphosphate + 1D-myo-inositol 1,3,4,5-tetrakisphosphate. Kinase that can phosphorylate various inositol polyphosphate such as Ins(3,4,5,6)P4 or Ins(1,3,4)P3. Phosphorylates Ins(3,4,5,6)P4 at position 1 to form Ins(1,3,4,5,6)P5. This reaction is thought to have regulatory importance, since Ins(3,4,5,6)P4 is an inhibitor of plasma membrane Ca(2+)-activated Cl(-) channels, while Ins(1,3,4,5,6)P5 is not. Also phosphorylates Ins(1,3,4)P3 on O-5 and O-6 to form Ins(1,3,4,6)P4, an essential molecule in the hexakisphosphate (InsP6) pathway. Also acts as an inositol polyphosphate phosphatase that dephosphorylates Ins(1,3,4,5)P4 and Ins(1,3,4,6)P4 to Ins(1,3,4)P3, and Ins(1,3,4,5,6)P5 to Ins(3,4,5,6)P4. May also act as an isomerase that interconverts the inositol tetrakisphosphate isomers Ins(1,3,4,5)P4 and Ins(1,3,4,6)P4 in the presence of ADP and magnesium. Probably acts as the rate-limiting enzyme of the InsP6 pathway. Modifies TNF-alpha-induced apoptosis by interfering with the activation of TNFRSF1A-associated death domain. Plays an important role in MLKL-mediated necroptosis. Produces highly phosphorylated inositol phosphates such as inositolhexakisphosphate (InsP6) which bind to MLKL mediating the release of an N-terminal auto-inhibitory region leading to its activation. Essential for activated phospho-MLKL to oligomerize and localize to the cell membrane during necroptosis. The polypeptide is Inositol-tetrakisphosphate 1-kinase (ITPK1) (Bos taurus (Bovine)).